A 135-amino-acid chain; its full sequence is NADH-quinone oxidoreductase subunit K (135 aa).

Transmembrane regions (helical) follow at residues 33–53 (VLGL…FAIG), 63–83 (FLFM…AFVV), and 95–115 (IMFI…LAIL).

This sequence belongs to the complex I subunit 4L family. As to quaternary structure, NDH-1 is composed of 14 different subunits. Subunits NuoA, H, J, K, L, M, N constitute the membrane sector of the complex.

It is found in the cell inner membrane. The catalysed reaction is a quinone + NADH + 5 H(+)(in) = a quinol + NAD(+) + 4 H(+)(out). Functionally, NDH-1 shuttles electrons from NADH, via FMN and iron-sulfur (Fe-S) centers, to quinones in the respiratory chain. The immediate electron acceptor for the enzyme in this species is believed to be ubiquinone. Couples the redox reaction to proton translocation (for every two electrons transferred, four hydrogen ions are translocated across the cytoplasmic membrane), and thus conserves the redox energy in a proton gradient. The polypeptide is NADH-quinone oxidoreductase subunit K (Psychrobacter arcticus (strain DSM 17307 / VKM B-2377 / 273-4)).